The following is a 137-amino-acid chain: Glutamyl-tRNA(Gln) amidotransferase subunit C, chloroplastic/mitochondrial (137 aa).

The protein belongs to the GatC family. As to quaternary structure, subunit of the heterotrimeric GatCAB amidotransferase (AdT) complex, composed of A, B and C subunits.

It is found in the mitochondrion. The protein localises to the plastid. It localises to the chloroplast. The catalysed reaction is L-glutamyl-tRNA(Gln) + L-glutamine + ATP + H2O = L-glutaminyl-tRNA(Gln) + L-glutamate + ADP + phosphate + H(+). Functionally, allows the formation of correctly charged Gln-tRNA(Gln) through the transamidation of misacylated Glu-tRNA(Gln) in chloroplasts and mitochondria. The reaction takes place in the presence of glutamine and ATP through an activated gamma-phospho-Glu-tRNA(Gln). The sequence is that of Glutamyl-tRNA(Gln) amidotransferase subunit C, chloroplastic/mitochondrial from Vitis vinifera (Grape).